Here is a 456-residue protein sequence, read N- to C-terminus: MASAVLPSGSQCAAAAAVAAAAAPPGLRLRLLLLLLSAAALIPTGDGQNLFTKDVTVIEGEVATISCQVNKSDDSVIQLLNPNRQTIYFRDFRPLKDSRFQLLNFSSSELKVSLTNVSISDEGRYFCQLYTDPPQESYTTITVLVPPRNLMIDIQKDTAVEGEEIEVNCTAMASKPATTIRWFKGNKELKGKSEVEEWSDMYTVTSQLMLKVHKEDDGVPVICQVEHPAVTGNLQTQRYLEVQYKPQVHIQMTYPLQGLTREGDAFELTCEAIGKPQPVMVTWVRVDDEMPQHAVLSGPNLFINNLNKTDNGTYRCEASNIVGKAHSDYMLYVYDPPTTIPPPTTTTTTTTTTTTTILTIITDTTATTEPAVHDSRAGEEGTIGAVDHAVIGGVVAVVVFAMLCLLIILGRYFARHKGTYFTHEAKGADDAADADTAIINAEGGQNNSEEKKEYFI.

A signal peptide spans 1 to 47 (MASAVLPSGSQCAAAAAVAAAAAPPGLRLRLLLLLLSAAALIPTGDG). The region spanning 48–142 (QNLFTKDVTV…PPQESYTTIT (95 aa)) is the Ig-like V-type domain. The Extracellular portion of the chain corresponds to 48–388 (QNLFTKDVTV…EEGTIGAVDH (341 aa)). A disulfide bridge links C67 with C127. 4 N-linked (GlcNAc...) asparagine glycosylation sites follow: N70, N104, N116, and N168. Ig-like C2-type domains follow at residues 147-241 (PRNL…RYLE) and 246-332 (PQVH…YMLY). 2 cysteine pairs are disulfide-bonded: C169-C223 and C270-C316. N-linked (GlcNAc...) asparagine glycans are attached at residues N307 and N311. The chain crosses the membrane as a helical span at residues 389–409 (AVIGGVVAVVVFAMLCLLIIL). The Cytoplasmic portion of the chain corresponds to 410-456 (GRYFARHKGTYFTHEAKGADDAADADTAIINAEGGQNNSEEKKEYFI). T436 is subject to Phosphothreonine. S448 carries the phosphoserine modification.

The protein belongs to the nectin family. Homodimer (via Ig-like V-type domain). Interacts with FARP1. Interacts (via Ig-like V-type domain) with CRTAM (via Ig-like V-type domain); the interaction competes with CRTAM homodimerization and CADM1 homodimerization. Interacts (via C-terminus) with EPB41L3/DAL1. The interaction with EPB41L3/DAL1 may act to anchor CADM1 to the actin cytoskeleton. Interacts (via C-terminus) with MPP2 (via PDZ domain). Interacts (via C-terminus) with MPP3 (via PDZ domain); this interaction connects CADM1 with DLG1. Interacts (via C-terminus) with PALS2 (via PDZ domain). N-glycosylated. In terms of processing, glycosylation at Asn-70 and Asn-104 promotes adhesive binding and synapse induction. In terms of tissue distribution, expressed dominantly in epithelial cells but not expressed in fibroblast cells (at protein level). Expressed in the T-cell area of lymph nodes, specifically in CD8+ and CD4- CD8- dendritic cells (at protein level). Expressed in CD8+ dendritic cells in the spleen (at protein level). Expressed in CD103+ dendritic cells in the small intestine lamina propria and mesenteric lymph nodes (at protein level). Expressed in brain, lung, kidney, testis, heart, spleen and liver, but not expressed in skeletal muscle.

It localises to the cell membrane. Its subcellular location is the synaptic cell membrane. Functionally, mediates homophilic cell-cell adhesion in a Ca(2+)-independent manner. Also mediates heterophilic cell-cell adhesion with CADM3 and NECTIN3 in a Ca(2+)-independent manner. Interaction with CRTAM promotes natural killer (NK) cell cytotoxicity and interferon-gamma (IFN-gamma) secretion by CD8+ T-cells in vitro as well as NK cell-mediated rejection of tumors expressing CADM1 in vivo. In mast cells, may mediate attachment to and promote communication with nerves. CADM1, together with MITF, is essential for development and survival of mast cells in vivo. By interacting with CRTAM and thus promoting the adhesion between CD8+ T-cells and CD8+ dendritic cells, regulates the retention of activated CD8+ T-cell within the draining lymph node. Required for the intestinal retention of intraepithelial CD4+ CD8+ T-cells and, to a lesser extent, intraepithelial and lamina propria CD8+ T-cells and CD4+ T-cells. Interaction with CRTAM promotes the adhesion to gut-associated CD103+ dendritic cells, which may facilitate the expression of gut-homing and adhesion molecules on T-cells and the conversion of CD4+ T-cells into CD4+ CD8+ T-cells. Acts as a synaptic cell adhesion molecule and plays a role in the formation of dendritic spines and in synapse assembly. May be involved in neuronal migration, axon growth, pathfinding, and fasciculation on the axons of differentiating neurons. May play diverse roles in the spermatogenesis including in the adhesion of spermatocytes and spermatids to Sertoli cells and for their normal differentiation into mature spermatozoa. The polypeptide is Cell adhesion molecule 1 (Mus musculus (Mouse)).